Reading from the N-terminus, the 131-residue chain is uncharacterized protein (131 aa).

Residues 16-71 (MSEQERDEVLEDDDDDEDNKSSQQERDEFVEDDDNNSIQSSPSCAQPLLTQYHDDG) form a disordered region. The span at 20 to 33 (ERDEVLEDDDDDED) shows a compositional bias: acidic residues.

This is an uncharacterized protein from Dictyostelium discoideum (Social amoeba).